The following is a 204-amino-acid chain: MKSKNNKFIAMSIPFILGTALGIYVESTYYFTSIINQKSFALPDTQIKHYSIPELSRRNVSTCFTPPAGCTKFIVQQLEKAEESIYMQAYGMSDSLITTALINAQMRGVKVKILLDRSNLKQKFSKLYELQQAKIDVGIDTVPGIAHNKVIIIDKKKVITGSFNFTVAADKRNAENVILIEDQQLAESYLQNWFSRKASNSVHF.

An N-terminal signal peptide occupies residues 1–22 (MKSKNNKFIAMSIPFILGTALG). The PLD phosphodiesterase domain maps to 142 to 169 (VPGIAHNKVIIIDKKKVITGSFNFTVAA). Residues His147, Lys149, and Asp154 contribute to the active site.

The protein belongs to the phospholipase D family. In terms of assembly, homodimer.

The protein localises to the secreted. It catalyses the reaction a 1,2-diacyl-sn-glycero-3-phosphocholine + H2O = a 1,2-diacyl-sn-glycero-3-phosphate + choline + H(+). Could be a virulence factor. This is Phospholipase D (pld) from Rickettsia typhi (strain ATCC VR-144 / Wilmington).